The following is a 203-amino-acid chain: MNPEYDYLFKLLLIGDSGVGKSCLLLRFADDTYTESYISTIGVDFKIRTIELDGKTVKLQIWDTAGQERFRTITSSYYRGAHGICVVYDVTDMDSFNNVKQWLQEIDRYATEGVNKLLVGNKSDMTDKKVVEYTVAKEFADSLGIPFLETSAKNASNVEQAFLTMARQIKERMGSSIATNNTKASVNVSPGHGVSNNSSGGCC.

GTP-binding positions include 15 to 23 (GDSGVGKSC), 33 to 40 (YTESYIST), 63 to 67 (DTAGQ), 121 to 124 (NKSD), and 151 to 153 (SAK). The short motif at 37 to 45 (YISTIGVDF) is the Effector region element. Residues 180–203 (NNTKASVNVSPGHGVSNNSSGGCC) form a disordered region. Residues Cys202 and Cys203 are each lipidated (S-geranylgeranyl cysteine).

Belongs to the small GTPase superfamily. Rab family.

Its subcellular location is the endoplasmic reticulum membrane. The protein resides in the golgi apparatus membrane. It localises to the cytoplasm. It is found in the preautophagosomal structure membrane. Rab activation is generally mediated by a guanine exchange factor (GEF), while inactivation through hydrolysis of bound GTP is catalyzed by a GTPase activating protein (GAP). Its function is as follows. The small GTPases Rab are key regulators of intracellular membrane trafficking, from the formation of transport vesicles to their fusion with membranes. Rabs cycle between an inactive GDP-bound form and an active GTP-bound form that is able to recruit to membranes different set of downstream effectors directly responsible for vesicle formation, movement, tethering and fusion. Ypt-1 regulates the trafficking of secretory vesicles from the endoplasmic reticulum (ER) to the Golgi. Plays a role in the initial events of the autophagic vacuole development which take place at specialized regions of the endoplasmic reticulum. Also involved in the recycling of membrane proteins. The sequence is that of GTP-binding protein ypt1 (ypt-1) from Neurospora crassa (strain ATCC 24698 / 74-OR23-1A / CBS 708.71 / DSM 1257 / FGSC 987).